The following is a 213-amino-acid chain: Phosphate-specific transport system accessory protein PhoU homolog 2 (213 aa).

The protein belongs to the PhoU family. In terms of assembly, homodimer.

It is found in the cytoplasm. Functionally, plays a role in the regulation of phosphate uptake. In this role, it may bind, possibly as a chaperone, to PhoR, PhoP or a PhoR-PhoP complex to promote dephosphorylation of phospho-PhoP, or inhibit formation of the PhoR-PhoP transitory complex. The sequence is that of Phosphate-specific transport system accessory protein PhoU homolog 2 (phoU2) from Mycobacterium bovis (strain ATCC BAA-935 / AF2122/97).